A 76-amino-acid polypeptide reads, in one-letter code: Conotoxin VnMKLT2-013 (76 aa).

The signal sequence occupies residues 1-23 (MMKLTCVLIIAVLFLTACQLTTA). Residues 24–42 (ETRDEYRAVRSSDEVQNSR) constitute a propeptide that is removed on maturation. The segment at 29 to 49 (YRAVRSSDEVQNSRSTDDCST) is disordered. 3 disulfide bridges follow: C47/C58, C52/C63, and C57/C72.

The protein belongs to the conotoxin O1 superfamily. As to expression, expressed by the venom duct.

Its subcellular location is the secreted. The polypeptide is Conotoxin VnMKLT2-013 (Conus ventricosus (Mediterranean cone)).